The chain runs to 284 residues: Deoxyribonuclease-1 (284 aa).

An N-terminal signal peptide occupies residues Met1–Ala22. The N-linked (GlcNAc...) asparagine glycan is linked to Asn40. Residue Glu100 is part of the active site. An intrachain disulfide couples Cys123 to Cys126. A glycan (N-linked (GlcNAc...) asparagine) is linked at Asn128. The active site involves His156. Cys195 and Cys231 form a disulfide bridge.

This sequence belongs to the DNase I family. Requires Ca(2+) as cofactor. Mg(2+) serves as cofactor. As to expression, highest expression in pancreas.

It localises to the secreted. The protein resides in the zymogen granule. The protein localises to the nucleus envelope. It carries out the reaction Endonucleolytic cleavage to 5'-phosphodinucleotide and 5'-phosphooligonucleotide end-products.. Functionally, serum endocuclease secreted into body fluids by a wide variety of exocrine and endocrine organs. Expressed by non-hematopoietic tissues and preferentially cleaves protein-free DNA. Among other functions, seems to be involved in cell death by apoptosis. Binds specifically to G-actin and blocks actin polymerization. Together with DNASE1L3, plays a key role in degrading neutrophil extracellular traps (NETs). NETs are mainly composed of DNA fibers and are released by neutrophils to bind pathogens during inflammation. Degradation of intravascular NETs by DNASE1 and DNASE1L3 is required to prevent formation of clots that obstruct blood vessels and cause organ damage following inflammation. The polypeptide is Deoxyribonuclease-1 (DNASE1) (Canis lupus familiaris (Dog)).